A 161-amino-acid chain; its full sequence is Regulator of ribonuclease activity A (161 aa).

The protein belongs to the RraA family. As to quaternary structure, homotrimer. Binds to both RNA-binding sites in the C-terminal region of Rne and to RhlB.

It is found in the cytoplasm. Its function is as follows. Globally modulates RNA abundance by binding to RNase E (Rne) and regulating its endonucleolytic activity. Can modulate Rne action in a substrate-dependent manner by altering the composition of the degradosome. Modulates RNA-binding and helicase activities of the degradosome. In Serratia proteamaculans (strain 568), this protein is Regulator of ribonuclease activity A.